A 428-amino-acid polypeptide reads, in one-letter code: Serine--tRNA ligase (428 aa).

235–237 (TAE) provides a ligand contact to L-serine. Residue 266-268 (RSE) coordinates ATP. Residue Glu-289 participates in L-serine binding. An ATP-binding site is contributed by 353-356 (EISS). L-serine is bound at residue Ser-389.

This sequence belongs to the class-II aminoacyl-tRNA synthetase family. Type-1 seryl-tRNA synthetase subfamily. In terms of assembly, homodimer. The tRNA molecule binds across the dimer.

It is found in the cytoplasm. The catalysed reaction is tRNA(Ser) + L-serine + ATP = L-seryl-tRNA(Ser) + AMP + diphosphate + H(+). It carries out the reaction tRNA(Sec) + L-serine + ATP = L-seryl-tRNA(Sec) + AMP + diphosphate + H(+). Its pathway is aminoacyl-tRNA biosynthesis; selenocysteinyl-tRNA(Sec) biosynthesis; L-seryl-tRNA(Sec) from L-serine and tRNA(Sec): step 1/1. Catalyzes the attachment of serine to tRNA(Ser). Is also able to aminoacylate tRNA(Sec) with serine, to form the misacylated tRNA L-seryl-tRNA(Sec), which will be further converted into selenocysteinyl-tRNA(Sec). The chain is Serine--tRNA ligase from Psychromonas ingrahamii (strain DSM 17664 / CCUG 51855 / 37).